The primary structure comprises 379 residues: tRNA(Met) cytidine acetate ligase (379 aa).

ATP is bound by residues 8–21, Gly97, Asn153, and Arg176; that span reads IAEF…HEYL.

The protein belongs to the TmcAL family.

The protein resides in the cytoplasm. It carries out the reaction cytidine(34) in elongator tRNA(Met) + acetate + ATP = N(4)-acetylcytidine(34) in elongator tRNA(Met) + AMP + diphosphate. Its function is as follows. Catalyzes the formation of N(4)-acetylcytidine (ac(4)C) at the wobble position of elongator tRNA(Met), using acetate and ATP as substrates. First activates an acetate ion to form acetyladenylate (Ac-AMP) and then transfers the acetyl group to tRNA to form ac(4)C34. The protein is tRNA(Met) cytidine acetate ligase of Lactococcus lactis subsp. cremoris (strain MG1363).